We begin with the raw amino-acid sequence, 671 residues long: Kinesin-like protein KIF2C (671 aa).

The interval 1–200 is globular; sequence MIDIDDVAAI…CNPLTVTDPI (200 aa). The tract at residues 37 to 58 is disordered; the sequence is QKRKSVNSKIPGPKEGLRSRST. The residue at position 41 (Ser41) is a Phosphoserine; by AURKB. Positions 44–47 match the Microtubule tip localization signal motif; it reads SKIP. A phosphoserine mark is found at Ser55, Ser57, Ser61, Ser112, Ser121, Ser133, and Ser138. Residues 115 to 138 are disordered; the sequence is AEEQAHSTRSTSSANPGNSVRRKS. Residues 121–132 are compositionally biased toward polar residues; sequence STRSTSSANPGN. The segment at 153–184 is negative regulator of microtubule-binding; sequence EKRAQNSEIRIKRAQEYDNSFPNWEFARMIKE. The region spanning 204-534 is the Kinesin motor domain; that stretch reads RICVCVRKRP…LRYADRVKEL (331 aa). ATP-binding positions include Arg210 and 294 to 301; that span reads GQTGSGKT. Ser465 carries the phosphoserine modification. Residues 533–568 are disordered; that stretch reads ELSPHSGPSGEQAVQMETEEMDASSHGASLTGNEEE. The stretch at 566 to 601 forms a coiled coil; sequence EEEELSSQMSSFNEAMTQIRELEERAMEELREIIQQ. Ser576 carries the phosphoserine modification.

Belongs to the TRAFAC class myosin-kinesin ATPase superfamily. Kinesin family. MCAK/KIF2 subfamily. In terms of assembly, interacts with CENPH. Interacts with MTUS2/TIP150; the interaction is direct. Interacts with MAPRE1; the interaction is direct, regulated by phosphorylation and is probably required for targeting to growing microtubule plus ends. Interacts with KIF18B at microtubule tips; this interaction increases the affinity of both partners for microtubule plus ends and is required for robust microtubule depolymerization. Phosphorylation by AURKA or AURKB strongly reduces KIF18B-binding. Post-translationally, phosphorylation by AURKB, regulates association with centromeres and kinetochores and the microtubule depolymerization activity. Ubiquitinated. As to expression, testis. Localized to the meiotically active cells of the seminiferous epithelia in the testis.

It is found in the cytoplasm. The protein localises to the cytoskeleton. The protein resides in the nucleus. Its subcellular location is the chromosome. It localises to the centromere. It is found in the kinetochore. Functionally, in complex with KIF18B, constitutes the major microtubule plus-end depolymerizing activity in mitotic cells. Regulates the turnover of microtubules at the kinetochore and functions in chromosome segregation during mitosis. Plays a role in chromosome congression and is required for the lateral to end-on conversion of the chromosome-microtubule attachment. This is Kinesin-like protein KIF2C (Kif2c) from Rattus norvegicus (Rat).